Consider the following 418-residue polypeptide: Serine hydroxymethyltransferase (418 aa).

Residues Leu-120 and 124-126 contribute to the (6S)-5,6,7,8-tetrahydrofolate site; that span reads GHL. Lys-229 carries the post-translational modification N6-(pyridoxal phosphate)lysine. (6S)-5,6,7,8-tetrahydrofolate is bound at residue 353–355; it reads SPF.

Belongs to the SHMT family. As to quaternary structure, homodimer. Pyridoxal 5'-phosphate serves as cofactor.

It localises to the cytoplasm. The catalysed reaction is (6R)-5,10-methylene-5,6,7,8-tetrahydrofolate + glycine + H2O = (6S)-5,6,7,8-tetrahydrofolate + L-serine. It participates in one-carbon metabolism; tetrahydrofolate interconversion. It functions in the pathway amino-acid biosynthesis; glycine biosynthesis; glycine from L-serine: step 1/1. Catalyzes the reversible interconversion of serine and glycine with tetrahydrofolate (THF) serving as the one-carbon carrier. This reaction serves as the major source of one-carbon groups required for the biosynthesis of purines, thymidylate, methionine, and other important biomolecules. Also exhibits THF-independent aldolase activity toward beta-hydroxyamino acids, producing glycine and aldehydes, via a retro-aldol mechanism. In Psychrobacter cryohalolentis (strain ATCC BAA-1226 / DSM 17306 / VKM B-2378 / K5), this protein is Serine hydroxymethyltransferase.